Consider the following 2136-residue polypeptide: Protein CELLULOSE SYNTHASE INTERACTIVE 3 (2136 aa).

ARM repeat units follow at residues 27-66 (MEMD…LLGI), 71-111 (REAR…VLCK), 113-152 (KDLR…EVSS), 159-201 (HIGM…NLCG), 204-243 (DGYW…RLVL), 246-286 (CDSI…ALSA), 289-337 (DEAK…NVFG), 376-417 (PESS…SLYG), 419-458 (SSLS…GLCH), 461-500 (VGIW…ILTA), 503-542 (DDSK…NLCC), 545-584 (EEIR…KLVH), 586-618 (ADPA…HVLS), 619-663 (KASQ…DLFS), 666-705 (QDIC…ALSR), 711-750 (NNKK…NLLS), 752-791 (PDIA…QLLK), 811-848 (SLVD…FSYP), 849-887 (PWIA…RLCS), 936-980 (QLIT…GFLE), 1013-1041 (SVDA…YTSS), 1042-1083 (AQAE…TLAV), 1109-1149 (RGIN…SLVK), 1163-1204 (EDVR…RIAD), 1207-1247 (DTNK…VLFS), 1249-1288 (HELR…ELFD), 1290-1329 (ENIR…KLSS), 1333-1375 (SNTA…VVFS), 1377-1416 (KNIR…ILLD), 1418-1457 (EQHL…KLGK), 1460-1499 (VPRK…ILTN), 1518-1546 (AVLL…KQQT), 1547-1585 (LEAF…HFLT), 1587-1626 (EDFQ…KISA), 1628-1669 (WPKA…NILQ), 1670-1704 (YDAE…ALML), 1710-1750 (ASST…NNPR), 1790-1833 (SQHE…NFVM), 1836-1875 (RTNR…FLFS), 1921-1960 (PKLR…LLRH), 1969-2008 (VAKS…CLPG), and 2010-2035 (LTVN…QLTI). The C2 domain occupies 1989 to 2106 (KTCPPRFHDK…VTEGEYSGSL (118 aa)).

Associates with cellulase synthase (CESA) complexes. Binds to cortical microtubules. Interacts with CESA3 and CESA6. In terms of tissue distribution, expressed in dark-grown hypocotyls, leaves (confined to vasculature and trichomes), stamen, pollen, developing siliques, and roots. Restricted in meristematic tissue of the shoot and root. Present in distinct punctae at the cell cortex, called microtubule-associated cellulose synthase compartments, that move with constant velocities of 10 to 3000 nm/min.

The protein localises to the cell membrane. It is found in the cytoplasm. The protein resides in the cytoskeleton. It localises to the endomembrane system. Regulator of the microtubular cytoskeleton. Microtubule-associated protein involved in the association of cellulase synthase (CESA) complexes (CSCs) and cortical microtubules. Promotes dynamics of CSCs in the plasma membrane in both microtubules-dependent and microtubules-independent manners. Regulates primary cell wall biosynthesis and cellulose microfibrils organization. The sequence is that of Protein CELLULOSE SYNTHASE INTERACTIVE 3 from Arabidopsis thaliana (Mouse-ear cress).